A 1342-amino-acid polypeptide reads, in one-letter code: DNA-directed RNA polymerase subunit beta (1342 aa).

Belongs to the RNA polymerase beta chain family. The RNAP catalytic core consists of 2 alpha, 1 beta, 1 beta' and 1 omega subunit. When a sigma factor is associated with the core the holoenzyme is formed, which can initiate transcription.

The enzyme catalyses RNA(n) + a ribonucleoside 5'-triphosphate = RNA(n+1) + diphosphate. DNA-dependent RNA polymerase catalyzes the transcription of DNA into RNA using the four ribonucleoside triphosphates as substrates. The sequence is that of DNA-directed RNA polymerase subunit beta from Salmonella gallinarum (strain 287/91 / NCTC 13346).